We begin with the raw amino-acid sequence, 548 residues long: 2-succinyl-5-enolpyruvyl-6-hydroxy-3-cyclohexene-1-carboxylate synthase (548 aa).

Belongs to the TPP enzyme family. MenD subfamily. In terms of assembly, homodimer. Mg(2+) serves as cofactor. Mn(2+) is required as a cofactor. It depends on thiamine diphosphate as a cofactor.

It carries out the reaction isochorismate + 2-oxoglutarate + H(+) = 5-enolpyruvoyl-6-hydroxy-2-succinyl-cyclohex-3-ene-1-carboxylate + CO2. It participates in quinol/quinone metabolism; 1,4-dihydroxy-2-naphthoate biosynthesis; 1,4-dihydroxy-2-naphthoate from chorismate: step 2/7. It functions in the pathway quinol/quinone metabolism; menaquinone biosynthesis. Its function is as follows. Catalyzes the thiamine diphosphate-dependent decarboxylation of 2-oxoglutarate and the subsequent addition of the resulting succinic semialdehyde-thiamine pyrophosphate anion to isochorismate to yield 2-succinyl-5-enolpyruvyl-6-hydroxy-3-cyclohexene-1-carboxylate (SEPHCHC). This is 2-succinyl-5-enolpyruvyl-6-hydroxy-3-cyclohexene-1-carboxylate synthase from Mycobacterium marinum (strain ATCC BAA-535 / M).